Here is a 795-residue protein sequence, read N- to C-terminus: MEGLTLSDAEQKYYSDLFSYCDIESTKKVVVNGRVLELFRAAQLPNDVVLQIMELCGATRLGYFGRSQFYIALKLVAVAQSGFPLRVESINTVKDLPLPRFVASKNEQESRLAASYSSDSENQGSYSGVIPPPPGRGQVKKGPGSHDAVQPRPSAEQQEPVSPVVSPQQSPPTSPHTWRKHSRHPSGGNSERPLTGPGPFWSPFGDAQAGSSAGDAVWSGQSPPPPQDNWVSFADTPPTSALLTMHPASVQDQTTVRTVASAATANEIRRQSSSYEDPWKITDEQRQYYVNQFKTIQPDLNGFIPGSAAKEFFTKSKLPILELSHIWELSDFDKDGALTLDEFCAAFHLVVARKNGYDLPEKLPESLMPKLIDLEDSADVGEQPGEVGYSGSPAEAPPSKSPSMPSLNQTWPELNQSSEQWETFSERSSSSQTLTQFDSNIAPADPDTAIVHPVPIRMTPSKIHMQEMELKRTSSDHTNPTSPLLVKPSDLSEENKINSSVKFPSGNTVDGYSSSDSFPSDPEQIGSSVTRQRSHSGTSPDNTAPPPPPPRPQPSHSRSSSLDMNRTFAVTTGQQQAGVVAHPPAVPPRPQPSQAPGPSVHRPVDADGLITHTSTSPQQIPEQPNFADFSQFEVFAASNVSEEQDSEAEKHPEVLPAEKASDPSSSLRAAQADSKAEEKTATNVPANVSKGTTPLAPPPKPVRRRLKSEDELRPDVDEHTQKTGVLAAVLTSQPSIPRSVGKDKKAIQASIRRNKETNTVLARLNSELQQQLKDVLEERISLEVQLEQLRPFSHL.

The EH 1 domain occupies 10-113 (EQKYYSDLFS…SKNEQESRLA (104 aa)). Residues 112–238 (LAASYSSDSE…NWVSFADTPP (127 aa)) form a disordered region. The span at 115–126 (SYSSDSENQGSY) shows a compositional bias: polar residues. A phosphoserine mark is found at Ser-145, Ser-162, Ser-166, and Ser-170. Low complexity predominate over residues 156-168 (EQQEPVSPVVSPQ). Thr-173 is subject to Phosphothreonine. Positions 205–216 (GDAQAGSSAGDA) are enriched in low complexity. Ser-272 and Ser-273 each carry phosphoserine. In terms of domain architecture, EH 2 spans 285–374 (QRQYYVNQFK…ESLMPKLIDL (90 aa)). Tyr-288 carries the phosphotyrosine modification. Ser-307 bears the Phosphoserine mark. An EF-hand domain is found at 318 to 353 (LPILELSHIWELSDFDKDGALTLDEFCAAFHLVVAR). Ca(2+) contacts are provided by Asp-331, Asp-333, Asp-335, and Glu-342. Disordered regions lie at residues 380 to 433 (VGEQ…SSQT) and 469 to 720 (ELKR…DEHT). Residues 407–433 (LNQTWPELNQSSEQWETFSERSSSSQT) show a composition bias toward polar residues. Phosphoserine is present on residues Ser-475, Ser-482, and Ser-489. Composition is skewed to polar residues over residues 497–518 (INSS…SDSF) and 525–542 (IGSS…SPDN). Ser-539 bears the Phosphoserine mark. Thr-543 carries the post-translational modification Phosphothreonine. The segment covering 543–553 (TAPPPPPPRPQ) has biased composition (pro residues). Phosphoserine is present on Ser-561. The segment covering 562–573 (LDMNRTFAVTTG) has biased composition (polar residues). The segment covering 574-583 (QQQAGVVAHP) has biased composition (low complexity). Pro residues predominate over residues 584 to 595 (PAVPPRPQPSQA). Polar residues-rich tracts occupy residues 611–622 (THTSTSPQQIPE) and 681–692 (ATNVPANVSKGT). An interaction with RALBP1 region spans residues 651–795 (HPEVLPAEKA…LEQLRPFSHL (145 aa)). Positions 707–720 (KSEDELRPDVDEHT) are enriched in basic and acidic residues. Ser-708 and Ser-739 each carry phosphoserine. A coiled-coil region spans residues 750 to 790 (SIRRNKETNTVLARLNSELQQQLKDVLEERISLEVQLEQLR).

In terms of assembly, homodimer (Potential). Interacts with RALBP1, CRK and GRB2. Binding to RALBP1 does not affect its Ral-binding activity. Forms a complex with the SH3 domains of CRK and GRB2 which may link it to an EGF-responsive tyrosine kinase. Interacts with RAB11FIP2. Interacts with AMPH, ITSN1 (via SH3 domains) and SGIP1; may be involved in clathrin-mediated endocytosis. EGF stimulates phosphorylation on Tyr-residues. As to expression, expressed in all tissues examined. The highest level expression was found in the kidney and testis.

It localises to the membrane. The protein resides in the clathrin-coated pit. May coordinate the cellular actions of activated EGF receptors and Ral-GTPases. The protein is RalBP1-associated Eps domain-containing protein 1 (Reps1) of Mus musculus (Mouse).